We begin with the raw amino-acid sequence, 130 residues long: Small ribosomal subunit protein uS11 (130 aa).

The protein belongs to the universal ribosomal protein uS11 family. As to quaternary structure, part of the 30S ribosomal subunit. Interacts with proteins S7 and S18. Binds to IF-3.

Its function is as follows. Located on the platform of the 30S subunit, it bridges several disparate RNA helices of the 16S rRNA. Forms part of the Shine-Dalgarno cleft in the 70S ribosome. The chain is Small ribosomal subunit protein uS11 from Bdellovibrio bacteriovorus (strain ATCC 15356 / DSM 50701 / NCIMB 9529 / HD100).